We begin with the raw amino-acid sequence, 357 residues long: Quinolinate synthase (357 aa).

The iminosuccinate site is built by His-50 and Ser-71. A [4Fe-4S] cluster-binding site is contributed by Cys-116. Residues 142-144 (YAN) and Ser-159 each bind iminosuccinate. Position 203 (Cys-203) interacts with [4Fe-4S] cluster. Iminosuccinate-binding positions include 229 to 231 (HPE) and Thr-246. Residue Cys-300 coordinates [4Fe-4S] cluster.

It belongs to the quinolinate synthase family. Type 1 subfamily. [4Fe-4S] cluster is required as a cofactor.

The protein resides in the cytoplasm. The enzyme catalyses iminosuccinate + dihydroxyacetone phosphate = quinolinate + phosphate + 2 H2O + H(+). The protein operates within cofactor biosynthesis; NAD(+) biosynthesis; quinolinate from iminoaspartate: step 1/1. In terms of biological role, catalyzes the condensation of iminoaspartate with dihydroxyacetone phosphate to form quinolinate. In Shewanella sp. (strain ANA-3), this protein is Quinolinate synthase.